The chain runs to 266 residues: Expansin-A13 (266 aa).

The signal sequence occupies residues 1-19 (MQRFLLPLLFLALSPPAIC). The region spanning 58 to 171 (GGACGYGDLV…RRINCRKEGS (114 aa)) is the Expansin-like EG45 domain. In terms of domain architecture, Expansin-like CBD spans 181–260 (IFISVLITNV…NWNYGQTFEG (80 aa)).

Belongs to the expansin family. Expansin A subfamily.

It localises to the secreted. It is found in the cell wall. Its subcellular location is the membrane. Its function is as follows. Causes loosening and extension of plant cell walls by disrupting non-covalent bonding between cellulose microfibrils and matrix glucans. No enzymatic activity has been found. The chain is Expansin-A13 (EXPA13) from Arabidopsis thaliana (Mouse-ear cress).